The primary structure comprises 367 residues: 4-hydroxy-3-methylbut-2-en-1-yl diphosphate synthase (flavodoxin) (367 aa).

[4Fe-4S] cluster is bound by residues Cys-265, Cys-268, Cys-300, and Glu-307.

Belongs to the IspG family. Requires [4Fe-4S] cluster as cofactor.

It carries out the reaction (2E)-4-hydroxy-3-methylbut-2-enyl diphosphate + oxidized [flavodoxin] + H2O + 2 H(+) = 2-C-methyl-D-erythritol 2,4-cyclic diphosphate + reduced [flavodoxin]. Its pathway is isoprenoid biosynthesis; isopentenyl diphosphate biosynthesis via DXP pathway; isopentenyl diphosphate from 1-deoxy-D-xylulose 5-phosphate: step 5/6. Its function is as follows. Converts 2C-methyl-D-erythritol 2,4-cyclodiphosphate (ME-2,4cPP) into 1-hydroxy-2-methyl-2-(E)-butenyl 4-diphosphate. The protein is 4-hydroxy-3-methylbut-2-en-1-yl diphosphate synthase (flavodoxin) of Bacillus cereus (strain ATCC 10987 / NRS 248).